Reading from the N-terminus, the 240-residue chain is Mitochondrial inner membrane protease ATP23 (240 aa).

Histidine 140 contacts a divalent metal cation. The active site involves glutamate 141. Histidine 144 is an a divalent metal cation binding site.

It belongs to the peptidase M76 family.

It localises to the mitochondrion inner membrane. In terms of biological role, has a dual role in the assembly of mitochondrial ATPase. Acts as a protease that removes N-terminal residues of mitochondrial ATPase CF(0) subunit 6 at the intermembrane space side. Also involved in the correct assembly of the membrane-embedded ATPase CF(0) particle, probably mediating association of subunit 6 with the subunit 9 ring. The sequence is that of Mitochondrial inner membrane protease ATP23 (ATP23) from Scheffersomyces stipitis (strain ATCC 58785 / CBS 6054 / NBRC 10063 / NRRL Y-11545) (Yeast).